We begin with the raw amino-acid sequence, 1055 residues long: Kinesin-like protein KIN-7D, mitochondrial (1055 aa).

Residues 1–23 (MASSSSRTRSSRPPSPASSTSSS) show a composition bias toward low complexity. Positions 1 to 36 (MASSSSRTRSSRPPSPASSTSSSHLSNRLIPRSNST) are disordered. A mitochondrion-targeting transit peptide spans 1-96 (MASSSSRTRS…PMDDTISSER (96 aa)). Residues 98-415 (SISVTVRFRP…LKFASRAKSI (318 aa)) enclose the Kinesin motor domain. Residue 178 to 185 (GVTSSGKT) coordinates ATP. 3 coiled-coil regions span residues 419 to 503 (ASRN…ILVS), 618 to 653 (PENS…GEAS), and 694 to 823 (LQEK…LAQT). The interval 826-856 (PMNGVNRKYNDGARSGRKGRISSSRSSGDEF) is disordered. A coiled-coil region spans residues 880-911 (LESALAEKEFIEDEYRKKAEEAKRREEALEND). The segment at 926 to 963 (NGALPEPNGTDPGRELEKSQSHAVLKERQVSSAPRQPE) is disordered. The span at 937–954 (PGRELEKSQSHAVLKERQ) shows a compositional bias: basic and acidic residues. The RING-type zinc finger occupies 1008–1043 (CKVCFESPTAAILLPCRHFCLCKSCSLACSECPICR).

It belongs to the TRAFAC class myosin-kinesin ATPase superfamily. Kinesin family. KIN-7 subfamily.

Its subcellular location is the mitochondrion. This chain is Kinesin-like protein KIN-7D, mitochondrial, found in Arabidopsis thaliana (Mouse-ear cress).